A 302-amino-acid chain; its full sequence is UDP-N-acetylenolpyruvoylglucosamine reductase (302 aa).

The region spanning 31–213 (KIGGPADFLI…KKIREFREKR (183 aa)) is the FAD-binding PCMH-type domain. R176 is an active-site residue. The active-site Proton donor is the S226. Residue E296 is part of the active site.

It belongs to the MurB family. FAD serves as cofactor.

The protein resides in the cytoplasm. It catalyses the reaction UDP-N-acetyl-alpha-D-muramate + NADP(+) = UDP-N-acetyl-3-O-(1-carboxyvinyl)-alpha-D-glucosamine + NADPH + H(+). It participates in cell wall biogenesis; peptidoglycan biosynthesis. Cell wall formation. This Carboxydothermus hydrogenoformans (strain ATCC BAA-161 / DSM 6008 / Z-2901) protein is UDP-N-acetylenolpyruvoylglucosamine reductase.